The sequence spans 85 residues: Small ribosomal subunit protein uS17 (85 aa).

This sequence belongs to the universal ribosomal protein uS17 family. In terms of assembly, part of the 30S ribosomal subunit.

Its function is as follows. One of the primary rRNA binding proteins, it binds specifically to the 5'-end of 16S ribosomal RNA. The sequence is that of Small ribosomal subunit protein uS17 from Citrifermentans bemidjiense (strain ATCC BAA-1014 / DSM 16622 / JCM 12645 / Bem) (Geobacter bemidjiensis).